Consider the following 77-residue polypeptide: Conotoxin S6.11 (77 aa).

An N-terminal signal peptide occupies residues 1–19 (MEKLTILLLVAAVLMSTQA). A propeptide spanning residues 20–50 (LIQGGLDERQKAKSNFFSKRKSNAESWWEGE) is cleaved from the precursor. Intrachain disulfides connect Cys51–Cys65, Cys58–Cys69, and Cys64–Cys74.

Belongs to the conotoxin O2 superfamily. In terms of tissue distribution, expressed by the venom duct.

Its subcellular location is the secreted. The sequence is that of Conotoxin S6.11 from Conus striatus (Striated cone).